The chain runs to 378 residues: Lipid-A-disaccharide synthase (378 aa).

The protein belongs to the LpxB family.

It catalyses the reaction a lipid X + a UDP-2-N,3-O-bis[(3R)-3-hydroxyacyl]-alpha-D-glucosamine = a lipid A disaccharide + UDP + H(+). Its pathway is bacterial outer membrane biogenesis; LPS lipid A biosynthesis. In terms of biological role, condensation of UDP-2,3-diacylglucosamine and 2,3-diacylglucosamine-1-phosphate to form lipid A disaccharide, a precursor of lipid A, a phosphorylated glycolipid that anchors the lipopolysaccharide to the outer membrane of the cell. The protein is Lipid-A-disaccharide synthase of Pseudomonas aeruginosa (strain LESB58).